The sequence spans 1225 residues: Cytosolic carboxypeptidase 1 (1225 aa).

The span at 366-392 (DDVVDESDDNEDTDAETEAEAENEDSD) shows a compositional bias: acidic residues. Positions 366 to 398 (DDVVDESDDNEDTDAETEAEAENEDSDQICKND) are disordered. In terms of domain architecture, Peptidase M14 spans 842 to 1132 (YPYTYSTLKM…KFCVGLLRLK (291 aa)). Zn(2+)-binding residues include His914, Glu917, and His1011. The active-site Proton donor/acceptor is the Glu1096. Acidic residues predominate over residues 1181 to 1193 (YSAESNDDVDPDL). Residues 1181–1225 (YSAESNDDVDPDLPENIGDFETSTLEEESFSDSEITRTHMSGQST) are disordered.

It belongs to the peptidase M14 family. Requires Zn(2+) as cofactor.

Its subcellular location is the cytoplasm. It localises to the cytosol. The protein resides in the nucleus. The protein localises to the mitochondrion. The enzyme catalyses (L-glutamyl)(n+1)-gamma-L-glutamyl-L-glutamyl-[protein] + H2O = (L-glutamyl)(n)-gamma-L-glutamyl-L-glutamyl-[protein] + L-glutamate. The catalysed reaction is C-terminal L-alpha-aminoacyl-L-glutamyl-L-glutamyl-[tubulin] + H2O = C-terminal L-alpha-aminoacyl-L-glutamyl-[tubulin] + L-glutamate. In terms of biological role, metallocarboxypeptidase that mediates protein deglutamylation of tubulin and non-tubulin target proteins. Catalyzes the removal of polyglutamate side chains present on the gamma-carboxyl group of glutamate residues within the C-terminal tail of alpha- and beta-tubulin. Specifically cleaves tubulin long-side-chains, while it is not able to remove the branching point glutamate. Also catalyzes the removal of polyglutamate residues from the carboxy-terminus of alpha-tubulin as well as non-tubulin proteins. In Xenopus laevis (African clawed frog), this protein is Cytosolic carboxypeptidase 1 (agtpbp1).